The following is a 235-amino-acid chain: Small ribosomal subunit protein uS3 (235 aa).

The region spanning 39-107 is the KH type-2 domain; sequence VRQFLNKELA…PAQINIAEVK (69 aa). Positions 216–235 are disordered; that stretch reads QPEQQPTDKPKKVPRGKGRK.

Belongs to the universal ribosomal protein uS3 family. Part of the 30S ribosomal subunit. Forms a tight complex with proteins S10 and S14.

Binds the lower part of the 30S subunit head. Binds mRNA in the 70S ribosome, positioning it for translation. The polypeptide is Small ribosomal subunit protein uS3 (Aggregatibacter actinomycetemcomitans (Actinobacillus actinomycetemcomitans)).